A 156-amino-acid chain; its full sequence is Large ribosomal subunit protein uL15 (156 aa).

The span at M1–G11 shows a compositional bias: basic and acidic residues. Residues M1–S40 form a disordered region. Residues R21–V35 are compositionally biased toward gly residues.

Belongs to the universal ribosomal protein uL15 family. As to quaternary structure, part of the 50S ribosomal subunit.

Its function is as follows. Binds to the 23S rRNA. This Brucella anthropi (strain ATCC 49188 / DSM 6882 / CCUG 24695 / JCM 21032 / LMG 3331 / NBRC 15819 / NCTC 12168 / Alc 37) (Ochrobactrum anthropi) protein is Large ribosomal subunit protein uL15.